Consider the following 122-residue polypeptide: Large ribosomal subunit protein bL12 (122 aa).

This sequence belongs to the bacterial ribosomal protein bL12 family. As to quaternary structure, homodimer. Part of the ribosomal stalk of the 50S ribosomal subunit. Forms a multimeric L10(L12)X complex, where L10 forms an elongated spine to which 2 to 4 L12 dimers bind in a sequential fashion. Binds GTP-bound translation factors.

Its function is as follows. Forms part of the ribosomal stalk which helps the ribosome interact with GTP-bound translation factors. Is thus essential for accurate translation. The chain is Large ribosomal subunit protein bL12 from Vibrio vulnificus (strain CMCP6).